Here is a 313-residue protein sequence, read N- to C-terminus: Short-chain dehydrogenase/reductase family 9C member 7 (313 aa).

Residue 29–53 participates in NADP(+) binding; it reads FITGCDSGFGNLLARQLVDRGMRVL. Substrate is bound at residue Ser160. Residue Tyr172 is the Proton acceptor of the active site. At Ser185 the chain carries Phosphoserine.

It belongs to the short-chain dehydrogenases/reductases (SDR) family.

The protein localises to the cytoplasm. It catalyses the reaction a N-[omega-(9R,10R)-epoxy-(13R)-hydroxy-(11E)-octadecenoyloxy]acyl-beta-D-glucosyl-(1&lt;-&gt;1)-sphing-4E-enine + NAD(+) = a N-[omega-(9R,10R)-epoxy-13-oxo-(11E)-octadecenoyloxy]acyl-beta-D-glucosyl-(1&lt;-&gt;1)-sphing-4E-enine + NADH + H(+). It carries out the reaction a N-[omega-(9R,10R)-epoxy-(13R)-hydroxy-(11E)-octadecenoyloxy]-acylsphing-4E-enine + NAD(+) = a N-[omega-(9R,10R)-epoxy-13-oxo-(11E)-octadecenoyloxy]-acylsphing-4E-enine + NADH + H(+). Plays a crucial role in the formation of the epidermal permeability barrier. Catalyzes the NAD+-dependent dehydrogenation of the linoleate 9,10-trans-epoxy-11E-13-alcohol esterified in omega-O-acylceramides (such as in N-[omega-(9R,10R)-epoxy-(13R)-hydroxy-(11E)-octadecenoyloxy]-acylsphing-4E-enine) to the corresponding 13-ketone, the reactive moiety required for binding of epidermal ceramides to proteins. Displays weak conversion of all-trans-retinal to all-trans-retinol in the presence of NADH. Has apparently no steroid dehydrogenase activity. The polypeptide is Short-chain dehydrogenase/reductase family 9C member 7 (SDR9C7) (Bos taurus (Bovine)).